Reading from the N-terminus, the 91-residue chain is Cell division topological specificity factor (91 aa).

This sequence belongs to the MinE family.

Prevents the cell division inhibition by proteins MinC and MinD at internal division sites while permitting inhibition at polar sites. This ensures cell division at the proper site by restricting the formation of a division septum at the midpoint of the long axis of the cell. This chain is Cell division topological specificity factor, found in Chloroflexus aggregans (strain MD-66 / DSM 9485).